A 559-amino-acid chain; its full sequence is MRLALLVLATIGYAVADLFTSIADMQNLLETERNIPKILDKYIHDEEERLVQLKKLSEEYSKKNEISIENGLKDITNPINAFLLIKRKIFDWKEIESKMNANKAGNVVSSITDDSYGVRYPTADDLSGAAIGLLRLQDTYRLDTKDLADGKIYADQGNYTFSAKDCFEIARAAYNEHDFYHTVMWMEEAQRRLGDEVEPTVEVEDILEYLAFALYKQNNLKHALKLTEELYKMNPTHPRAKGNVKWYEDLLEQEGVRRSDMRKNLPPIQNRRPDSVLGNTERTMYEALCRNEVPVSQKDISRLYCYYKRDRPFLVYAPIKVEIKRFNPLAVLFKDVISDDEVAAIQELAKPKLARATVHDSVTGKLVTATYRISKSAWLKEWEGDVVETVNKRIGYMTNLEMETAEELQIANYGIGGHYDPHFDHAKKEESKSFESLGTGNRIATVLFYMSQPSHGGGTVFTEAKSTILPTKNDALFWYNLYKQGDGNPDTRHAACPVLVGIKWVSNKWIHEKGNEFRRPCGLKSSDYERFVGDLGYGPEPRNAPNVSPNLAKDVWETL.

Residues 1–16 form the signal peptide; the sequence is MRLALLVLATIGYAVA. N158 is a glycosylation site (N-linked (GlcNAc...) asparagine). The Fe2OG dioxygenase domain occupies 404–512; the sequence is TAEELQIANY…KWVSNKWIHE (109 aa). H422, D424, and H493 together coordinate Fe cation. K503 contacts 2-oxoglutarate.

The protein belongs to the P4HA family. As to quaternary structure, heterotetramer of two alpha chains and two beta chains. Exists either as a phy-1(2)/pdi-2(2) tetramer or as a phy-1/phy-2/pdi-2(2) tetramer. Fe(2+) is required as a cofactor. L-ascorbate serves as cofactor.

The protein resides in the endoplasmic reticulum lumen. The enzyme catalyses L-prolyl-[collagen] + 2-oxoglutarate + O2 = trans-4-hydroxy-L-prolyl-[collagen] + succinate + CO2. Catalyzes the post-translational formation of 4-hydroxyproline in -Xaa-Pro-Gly- sequences in collagens and other proteins. The polypeptide is Prolyl 4-hydroxylase subunit alpha-1 (dpy-18) (Caenorhabditis elegans).